Reading from the N-terminus, the 531-residue chain is Bifunctional protein TrpGD (531 aa).

The Glutamine amidotransferase type-1 domain occupies Asp-3–Pro-196. Gly-57–Gly-59 is an L-glutamine binding site. Cys-84 acts as the Nucleophile; for GATase activity in catalysis. Residues Gln-88 and Ser-134 to Leu-135 contribute to the L-glutamine site. Catalysis depends on for GATase activity residues His-170 and Glu-172. The tract at residues Pro-202 to Gly-531 is anthranilate phosphoribosyltransferase.

In the C-terminal section; belongs to the anthranilate phosphoribosyltransferase family. As to quaternary structure, monomer. Heterotetramer consisting of two non-identical subunits: a beta subunit (TrpG) and a large alpha subunit (TrpE).

It catalyses the reaction chorismate + L-glutamine = anthranilate + pyruvate + L-glutamate + H(+). It carries out the reaction N-(5-phospho-beta-D-ribosyl)anthranilate + diphosphate = 5-phospho-alpha-D-ribose 1-diphosphate + anthranilate. Its pathway is amino-acid biosynthesis; L-tryptophan biosynthesis; L-tryptophan from chorismate: step 1/5. The protein operates within amino-acid biosynthesis; L-tryptophan biosynthesis; L-tryptophan from chorismate: step 2/5. With respect to regulation, cooperatively feedback inhibited by tryptophan. In terms of biological role, part of a heterotetrameric complex that catalyzes the two-step biosynthesis of anthranilate, an intermediate in the biosynthesis of L-tryptophan. In the first step, the glutamine-binding beta subunit (TrpG) of anthranilate synthase (AS) provides the glutamine amidotransferase activity which generates ammonia as a substrate that, along with chorismate, is used in the second step, catalyzed by the large alpha subunit of AS (TrpE) to produce anthranilate. In the absence of TrpG, TrpE can synthesize anthranilate directly from chorismate and high concentrations of ammonia. In addition to synthesizing anthranilate, it also catalyzes the second step of the pathway, the transfer of the phosphoribosyl group of 5-phosphorylribose-1-pyrophosphate (PRPP) to anthranilate. In Salmonella typhimurium (strain LT2 / SGSC1412 / ATCC 700720), this protein is Bifunctional protein TrpGD (trpGD).